The sequence spans 350 residues: Serine/threonine-protein kinase SRK2F (350 aa).

The Protein kinase domain maps to 4 to 260; sequence YDILRDLGSG…VPEIEKHPWF (257 aa). ATP is bound by residues 10–18 and K33; that span reads LGSGNFGVA. D123 serves as the catalytic Proton acceptor. The stretch at 270-303 forms a coiled coil; it reads EEEKCDNGVEEEEEEEEKCRQSVEEIVKIIEEAR.

The protein belongs to the protein kinase superfamily. Ser/Thr protein kinase family. In terms of tissue distribution, expressed in seedlings.

The catalysed reaction is L-seryl-[protein] + ATP = O-phospho-L-seryl-[protein] + ADP + H(+). The enzyme catalyses L-threonyl-[protein] + ATP = O-phospho-L-threonyl-[protein] + ADP + H(+). In Arabidopsis thaliana (Mouse-ear cress), this protein is Serine/threonine-protein kinase SRK2F (SRK2F).